A 207-amino-acid polypeptide reads, in one-letter code: Transcriptional regulator YqjI (207 aa).

Over residues M1–G40 the composition is skewed to basic and acidic residues. Positions M1–R46 are disordered.

As to quaternary structure, oligomer (probable predominant form) and monomer.

Divalent metals such as nickel and iron have a similar negative effect on YqjI DNA-binding activity. In terms of biological role, represses the expression of YqjH which is involved in iron homeostasis under excess nickel conditions. Also represses its own expression. This Escherichia coli (strain K12) protein is Transcriptional regulator YqjI (yqjI).